The following is a 279-amino-acid chain: Membrane protein insertase YidC (279 aa).

Residues 1–22 (MKHLKRNMALLSVAALSFILTA) form the signal peptide. A lipid anchor (N-palmitoyl cysteine) is attached at Cys23. A lipid anchor (S-diacylglycerol cysteine) is attached at Cys23. 5 helical membrane passes run 35 to 55 (IWDG…SKLF), 59 to 79 (YGWG…PLMI), 129 to 149 (MAGC…YAAV), 170 to 190 (PYFI…WLSM), and 210 to 230 (PLVI…YWVV). The segment covering 253-268 (EEKIQTEKAKRKAIEK) has biased composition (basic and acidic residues). The tract at residues 253–279 (EEKIQTEKAKRKAIEKAKRRAMKSKRK) is disordered. Positions 269 to 279 (AKRRAMKSKRK) are enriched in basic residues.

It belongs to the OXA1/ALB3/YidC family. Type 2 subfamily.

Its subcellular location is the cell membrane. Functionally, required for the insertion and/or proper folding and/or complex formation of integral membrane proteins into the membrane. Involved in integration of membrane proteins that insert both dependently and independently of the Sec translocase complex, as well as at least some lipoproteins. In Pediococcus pentosaceus (strain ATCC 25745 / CCUG 21536 / LMG 10740 / 183-1w), this protein is Membrane protein insertase YidC.